We begin with the raw amino-acid sequence, 350 residues long: tRNA uridine(34) hydroxylase (350 aa).

Residues Asp-146 to Leu-240 form the Rhodanese domain. Residue Cys-200 is the Cysteine persulfide intermediate of the active site.

This sequence belongs to the TrhO family.

The enzyme catalyses uridine(34) in tRNA + AH2 + O2 = 5-hydroxyuridine(34) in tRNA + A + H2O. Catalyzes oxygen-dependent 5-hydroxyuridine (ho5U) modification at position 34 in tRNAs. The chain is tRNA uridine(34) hydroxylase from Yersinia enterocolitica serotype O:8 / biotype 1B (strain NCTC 13174 / 8081).